Consider the following 354-residue polypeptide: Methylthioribose-1-phosphate isomerase (354 aa).

Substrate contacts are provided by residues arginine 58–alanine 60, arginine 101, and glutamine 204. Aspartate 245 serves as the catalytic Proton donor. A substrate-binding site is contributed by asparagine 255–lysine 256.

Belongs to the eIF-2B alpha/beta/delta subunits family. MtnA subfamily.

The catalysed reaction is 5-(methylsulfanyl)-alpha-D-ribose 1-phosphate = 5-(methylsulfanyl)-D-ribulose 1-phosphate. It functions in the pathway amino-acid biosynthesis; L-methionine biosynthesis via salvage pathway; L-methionine from S-methyl-5-thio-alpha-D-ribose 1-phosphate: step 1/6. Functionally, catalyzes the interconversion of methylthioribose-1-phosphate (MTR-1-P) into methylthioribulose-1-phosphate (MTRu-1-P). The sequence is that of Methylthioribose-1-phosphate isomerase from Xylella fastidiosa (strain M12).